The following is a 615-amino-acid chain: Protein DBF4 homolog B (615 aa).

One can recognise a BRCT domain in the interval 43-133; that stretch reads ARKHPFSGKS…DPKGSHPRPS (91 aa). 2 disordered regions span residues 93–141 and 264–293; these read REVK…DSVP and FEAP…AHTM. Positions 275–284 are enriched in basic and acidic residues; the sequence is HTRESKDGEP. The DBF4-type zinc finger occupies 294 to 343; it reads PRRKKGYCECCQEAFEELHVHLQSAQHRSFALEAHLYAEVDRIIAQLSHS. Residues Cys-301, Cys-304, His-314, and His-320 each coordinate Zn(2+). The segment at 371–407 is disordered; that stretch reads TLHPHQPSHPRAASPRIRKEDSCQASVTQGRAAGQQR.

In terms of assembly, forms a complex with CDC7. Note that CDC7 forms distinct complex either with DBF4/DBF4A or DBF4B. Such complexes are stable upon replication stress. Phosphorylated. In terms of tissue distribution, widely expressed. Highly expressed in testis.

It is found in the nucleus. Its function is as follows. Regulatory subunit for CDC7 which activates its kinase activity thereby playing a central role in DNA replication and cell proliferation. Required for progression of S and M phases. The complex CDC7-DBF4B selectively phosphorylates MCM2 subunit at 'Ser-40' and then is involved in regulating the initiation of DNA replication during cell cycle. The polypeptide is Protein DBF4 homolog B (DBF4B) (Homo sapiens (Human)).